We begin with the raw amino-acid sequence, 631 residues long: Pescadillo homolog (631 aa).

The 94-residue stretch at 321-414 (RLRTLFKGLK…QLLPTNDYFL (94 aa)) folds into the BRCT domain. Positions 428–442 (SKRDSYIPPEEKALH) are enriched in basic and acidic residues. Disordered stretches follow at residues 428-471 (SKRD…EADQ) and 489-560 (YKKY…EVDE). Phosphoserine occurs at positions 453 and 457. Acidic residues-rich tracts occupy residues 453-471 (SEEESEEDEAEKEEEEADQ) and 498-525 (VNEDEEDLSEEDDEEDDDEEDVDKEDVD). A compositionally biased stretch (basic and acidic residues) spans 526–538 (EQTKRKQQEKEKM). Positions 544 to 553 (KVHKVNKRQV) are enriched in basic residues. Residues 593–629 (LRKKRRNIDADTKEAKKAAKREARKLAAEAAARAAKL) are a coiled coil.

This sequence belongs to the pescadillo family.

Its subcellular location is the nucleus. The protein localises to the nucleolus. It is found in the nucleoplasm. In terms of biological role, required for maturation of ribosomal RNAs and formation of the large ribosomal subunit. The polypeptide is Pescadillo homolog (Drosophila persimilis (Fruit fly)).